The following is a 350-amino-acid chain: uncharacterized protein (350 aa).

The tract at residues 330 to 350 (RHPGDLRSEPHYRPSAKLAEF) is disordered. A compositionally biased stretch (basic and acidic residues) spans 331–341 (HPGDLRSEPHY).

This is an uncharacterized protein from Mycobacterium tuberculosis.